Here is a 536-residue protein sequence, read N- to C-terminus: Caspase recruitment domain-containing protein 9 (536 aa).

Position 2 is a phosphoserine (serine 2). Residues aspartate 3, cysteine 10, and histidine 73 each coordinate Zn(2+). The region spanning 6–98 (NDDECWSTLE…QLYRKVTGKE (93 aa)) is the CARD domain. The linker stretch occupies residues 99 to 116 (PARVFSMIIDASGESGLT). Residues 117–272 (QLLMTEVMKL…ELQVSVQEGK (156 aa)) are a coiled coil. Lysine 125 is covalently cross-linked (Glycyl lysine isopeptide (Lys-Gly) (interchain with G-Cter in ubiquitin)). Threonine 231 is modified (phosphothreonine; by PKC/PRKCD). Serine 277 carries the phosphoserine modification. A coiled-coil region spans residues 303–415 (SLRKDLRQAE…LLAAEGRLKQ (113 aa)). Serine 424, serine 425, serine 431, serine 451, serine 461, serine 483, and serine 498 each carry phosphoserine. Positions 425 to 451 (SDLEDSSPRNSQELSLPQDLEEDAQLS) are disordered. Positions 476–536 (LTHGMGPSSS…GSDNTDTEGS (61 aa)) are disordered. Positions 487-502 (PPEKERRRLKESFENY) are enriched in basic and acidic residues. A phosphothreonine; by CK2 mark is found at threonine 531 and threonine 533.

In terms of assembly, monomer. Homodimer; homodimerization is mediated by the CARD domain which forms an extensive interaction with the adjacent linker and coiled-coil regions; leads to an autoinhibited state. Homomultimer; polymerizes following activation, forming a nucleating helical template that seeds BCL10-filament formation via a CARD-CARD interaction. Interacts (via CARD domain) with BCL10 (via CARD domain); interaction takes place following CARD9 activation and polymerization, leading to the formation of a filamentous CBM complex assembly. Component of a CBM complex (CARD9-BCL10, MALT1), composed of CARD9, BCL10 and MALT1. Interacts with RASGRF1. Interacts with NOD2 (via NACHT domain); interaction is direct. Interacts with RIPK2. Interacts with VHL; without leading to protein degradation. Phosphorylated at Thr-231 by PRKCD downstream of C-type lectin receptors activation: phosphorylation promotes interaction with BCL10, followed by activation of NF-kappa-B and MAP kinase p38 pathways. Phosphorylated at Thr-531 and Thr-531 by CK2 following interaction with VHL, leading to inhibit the ability to activate NF-kappa-B. In terms of processing, ubiquitinated at Lys-125 via 'Lys-27'-linked ubiquitin by TRIM62 downstream of C-type lectin receptors activation; leading to CARD9 activation, followed by activation of NF-kappa-B and MAP kinase p38 pathways. Deubiquitinated at Lys-125 by USP15, inhibiting CARD9. As to expression, specifically expressed in myeloid cells. Not expressed in non-lymphoid organs.

It localises to the cytoplasm. Maintained in an autoinhibited state via homodimerization in which the CARD domain forms an extensive interaction with the adjacent linker and coiled-coil regions. Activation downstream of C-type lectin receptors, by phosphorylation by PRKCD and/or ubiquitination by TRIM62, triggers disruption of the CARD domain-coiled coil interface, CARD9 homooligomerization and BCL10 recruitment, followed by activation of NF-kappa-B and MAP kinase p38 pathways. Zinc-binding inhibits activation by stabilizing the CARD ground-state conformation and restricting its capacity to form BCL10-nucleating filaments. Its function is as follows. Adapter protein that plays a key role in innate immune response against fungi by forming signaling complexes downstream of C-type lectin receptors. CARD9-mediated signals are essential for antifungal immunity against a subset of fungi from the phylum Ascomycota. Transduces signals in myeloid cells downstream of C-type lectin receptors CLEC7A (dectin-1), CLEC6A (dectin-2) and CLEC4E (Mincle), which detect pathogen-associated molecular pattern metabolites (PAMPs), such as fungal carbohydrates, and trigger CARD9 activation. Upon activation, CARD9 homooligomerizes to form a nucleating helical template that recruits BCL10 via CARD-CARD interaction, thereby promoting polymerization of BCL10 and subsequent recruitment of MALT1: this leads to activation of NF-kappa-B and MAP kinase p38 (MAPK11, MAPK12, MAPK13 and/or MAPK14) pathways which stimulate expression of genes encoding pro-inflammatory cytokines and chemokines. CARD9 signaling in antigen-presenting cells links innate sensing of fungi to the activation of adaptive immunity and provides a cytokine milieu that induces the development and subsequent of interleukin 17-producing T helper (Th17) cells. Also involved in activation of myeloid cells via classical ITAM-associated receptors and TLR: required for TLR-mediated activation of MAPK, while it is not required for TLR-induced activation of NF-kappa-B. CARD9 can also be engaged independently of BCL10: forms a complex with RASGRF1 downstream of C-type lectin receptors, which recruits and activates HRAS, leading to ERK activation and the production of cytokines. Acts as an important regulator of the intestinal commensal fungi (mycobiota) component of the gut microbiota. Plays an essential role in antifungal immunity against dissemination of gut fungi: acts by promoting induction of antifungal IgG antibodies response in CX3CR1(+) macrophages to confer protection against disseminated C.albicans or C.auris infection. Also mediates immunity against other pathogens, such as certain bacteria, viruses and parasites; CARD9 signaling is however redundant with other innate immune responses. In response to L.monocytogenes infection, required for the production of inflammatory cytokines activated by intracellular peptidoglycan: acts by connecting NOD2 recognition of peptidoglycan to downstream activation of MAP kinases (MAPK) without activating NF-kappa-B. This is Caspase recruitment domain-containing protein 9 from Mus musculus (Mouse).